A 134-amino-acid polypeptide reads, in one-letter code: Acyl carrier protein, chloroplastic (134 aa).

A chloroplast-targeting transit peptide spans 1–51 (MATTFSASVSTLATSLATPTRISFQKPALVSRTNLSFNLRRSIPTRLSVSC). The region spanning 55–130 (PETIEKVSKI…EAAELIEELV (76 aa)) is the Carrier domain. Position 90 is an O-(pantetheine 4'-phosphoryl)serine (Ser-90).

This sequence belongs to the acyl carrier protein (ACP) family. 4'-phosphopantetheine is transferred from CoA to a specific serine of apo-ACP by acpS. This modification is essential for activity because fatty acids are bound in thioester linkage to the sulfhydryl of the prosthetic group. Seed.

Its subcellular location is the plastid. The protein resides in the chloroplast. Its pathway is lipid metabolism; fatty acid biosynthesis. Its function is as follows. Carrier of the growing fatty acid chain in fatty acid biosynthesis. In Brassica napus (Rape), this protein is Acyl carrier protein, chloroplastic (ACL1.A3).